A 414-amino-acid chain; its full sequence is Probable mannose-1-phosphate guanyltransferase (414 aa).

This sequence belongs to the transferase hexapeptide repeat family.

The protein resides in the cytoplasm. It is found in the nucleus. It carries out the reaction alpha-D-mannose 1-phosphate + GTP + H(+) = GDP-alpha-D-mannose + diphosphate. It participates in nucleotide-sugar biosynthesis; GDP-alpha-D-mannose biosynthesis; GDP-alpha-D-mannose from alpha-D-mannose 1-phosphate (GTP route): step 1/1. Its function is as follows. Involved in cell wall synthesis where it is required for glycosylation. The chain is Probable mannose-1-phosphate guanyltransferase from Schizosaccharomyces pombe (strain 972 / ATCC 24843) (Fission yeast).